We begin with the raw amino-acid sequence, 526 residues long: Catalase (526 aa).

A compositionally biased stretch (basic and acidic residues) spans 1 to 22 (MADDREKSTDQMKLWKEGRGSQ). The disordered stretch occupies residues 1–29 (MADDREKSTDQMKLWKEGRGSQRPDVLTT). Catalysis depends on residues His-75 and Asn-148. NADP(+)-binding residues include His-194, Ser-201, Arg-203, Asn-213, Lys-237, Trp-303, His-305, and Lys-306. Heme is bound at residue Tyr-358.

This sequence belongs to the catalase family. Homotetramer. It depends on heme as a cofactor. NADP(+) serves as cofactor.

Its subcellular location is the peroxisome matrix. The catalysed reaction is 2 H2O2 = O2 + 2 H2O. In terms of biological role, catalyzes the degradation of hydrogen peroxide (H(2)O(2)) generated by peroxisomal oxidases to water and oxygen, thereby protecting cells from the toxic effects of hydrogen peroxide. This Danio rerio (Zebrafish) protein is Catalase (cat).